Reading from the N-terminus, the 306-residue chain is Plant-type L-asparaginase (306 aa).

The active-site Nucleophile is Thr-176. Substrate is bound by residues Arg-203 to Asp-206 and Thr-225 to Gly-228.

This sequence belongs to the Ntn-hydrolase family. Heterotetramer of two alpha and two beta chains arranged as a dimer of alpha/beta heterodimers. The uncleaved protein forms homodimers. In terms of processing, autocleaved. Generates the alpha and beta subunits. The N-terminal residue of the beta subunit is thought to be responsible for the nucleophile hydrolase activity. Predominantly produced in the uncleaved form when gene expression is induced at 37 degrees Celsius with 0.5 mM IPTG. When produced at 42 degrees Celsius without adding IPTG, approximately 90% of the protein is found in the cleaved form, while the remaining 10% is observed as uncleaved precursor. Undergoes complete auto-cleavage within 24 hours at 37 degrees Celsius.

It catalyses the reaction L-asparagine + H2O = L-aspartate + NH4(+). Undergoes auto-cleavage in a temperature-dependent and glycine-independent manner. Metal ions and EDTA do not have any significant effect on enzyme activity, indicating that activity is metal-independent. Its function is as follows. Catalyzes the hydrolysis of L-asparagine into L-aspartate and ammonia. Also displays D-asparaginase activity, which is about 10% of the L-asparaginase activity. Does not exhibit glutaminase activity. The polypeptide is Plant-type L-asparaginase (Thermococcus kodakarensis (strain ATCC BAA-918 / JCM 12380 / KOD1) (Pyrococcus kodakaraensis (strain KOD1))).